Reading from the N-terminus, the 220-residue chain is Cytidylate kinase (220 aa).

9 to 17 lines the ATP pocket; the sequence is GPAASGKST.

This sequence belongs to the cytidylate kinase family. Type 1 subfamily.

The protein resides in the cytoplasm. The catalysed reaction is CMP + ATP = CDP + ADP. It carries out the reaction dCMP + ATP = dCDP + ADP. The chain is Cytidylate kinase from Thermotoga maritima (strain ATCC 43589 / DSM 3109 / JCM 10099 / NBRC 100826 / MSB8).